Reading from the N-terminus, the 327-residue chain is MIDLFINIASFTIYGIPVIPLFIIVFVILSYYLLLLHDESPLWLEKENVYIDVKEGEQHQFPSLVENKNPIDNIYLSVIVPAYNEQIRLPSMLDDAIKFLNEKSKKDLKFSYEIIIIDDGSKDSTAKLVTSYIEKQPSSNIRLLKLKQNRGKGGAVKRGILCSRGKYCLMVDADGATEFKDFNRVEDIMHKIEKNDLGIVCGSRSHLVDSDLVAKRSFLRNILMYGFHIFVQTLCVKGIKDTQCGFKLFTRETARRIFPTLHIERWAFDVEILYLAQKLNIPIAEVAVNWTEIDGSKLDPFSSSIQMAKDIVRIRFRYLLGIWKIKS.

At 1–15 the chain is on the lumenal side; that stretch reads MIDLFINIASFTIYG. The chain crosses the membrane as a helical span at residues 16 to 36; sequence IPVIPLFIIVFVILSYYLLLL. The Cytoplasmic portion of the chain corresponds to 37–327; it reads HDESPLWLEK…YLLGIWKIKS (291 aa).

This sequence belongs to the glycosyltransferase 2 family.

The protein resides in the endoplasmic reticulum membrane. It catalyses the reaction a di-trans,poly-cis-dolichyl phosphate + UDP-alpha-D-glucose = a di-trans,poly-cis-dolichyl beta-D-glucosyl phosphate + UDP. Its pathway is protein modification; protein glycosylation. Endoplasmic reticulum membrane-bound UDP-glucose:dolichyl-phosphate glucosyltransferase involved in protein N-linked glycosylation. The sequence is that of Dolichyl-phosphate beta-glucosyltransferase (alg5) from Dictyostelium discoideum (Social amoeba).